The sequence spans 275 residues: Dermonecrotic toxin SpeSicTox-betaIIA2ii (275 aa).

Histidine 5 is a catalytic residue. Glutamate 25 and aspartate 27 together coordinate Mg(2+). Histidine 41 (nucleophile) is an active-site residue. 2 cysteine pairs are disulfide-bonded: cysteine 45/cysteine 51 and cysteine 47/cysteine 190. Mg(2+) is bound at residue aspartate 85.

Belongs to the arthropod phospholipase D family. Class II subfamily. It depends on Mg(2+) as a cofactor. As to expression, expressed by the venom gland.

It is found in the secreted. The catalysed reaction is an N-(acyl)-sphingosylphosphocholine = an N-(acyl)-sphingosyl-1,3-cyclic phosphate + choline. It carries out the reaction an N-(acyl)-sphingosylphosphoethanolamine = an N-(acyl)-sphingosyl-1,3-cyclic phosphate + ethanolamine. The enzyme catalyses a 1-acyl-sn-glycero-3-phosphocholine = a 1-acyl-sn-glycero-2,3-cyclic phosphate + choline. It catalyses the reaction a 1-acyl-sn-glycero-3-phosphoethanolamine = a 1-acyl-sn-glycero-2,3-cyclic phosphate + ethanolamine. Dermonecrotic toxins cleave the phosphodiester linkage between the phosphate and headgroup of certain phospholipids (sphingolipid and lysolipid substrates), forming an alcohol (often choline) and a cyclic phosphate. This toxin acts on sphingomyelin (SM). It may also act on ceramide phosphoethanolamine (CPE), lysophosphatidylcholine (LPC) and lysophosphatidylethanolamine (LPE), but not on lysophosphatidylserine (LPS), and lysophosphatidylglycerol (LPG). It acts by transphosphatidylation, releasing exclusively cyclic phosphate products as second products. Induces dermonecrosis, hemolysis, increased vascular permeability, edema, inflammatory response, and platelet aggregation. The polypeptide is Dermonecrotic toxin SpeSicTox-betaIIA2ii (Sicarius peruensis (Six-eyed sand spider)).